The following is a 141-amino-acid chain: Elongation factor G, chloroplastic (141 aa).

The region spanning 12 to 141 (KDYRNIGIMA…VPRICFVNKM (130 aa)) is the tr-type G domain. Residues 21 to 28 (AHIDAGKT) and 85 to 89 (DTPGH) each bind GTP.

It belongs to the TRAFAC class translation factor GTPase superfamily. Classic translation factor GTPase family. EF-G/EF-2 subfamily.

It is found in the plastid. The protein localises to the chloroplast. Its pathway is protein biosynthesis; polypeptide chain elongation. In terms of biological role, chloroplast-localized elongation factor EF-G involved in protein synthesis in plastids. Catalyzes the GTP-dependent ribosomal translocation step during translation elongation. During this step, the ribosome changes from the pre-translocational (PRE) to the post-translocational (POST) state as the newly formed A-site-bound peptidyl-tRNA and P-site-bound deacylated tRNA move to the P and E sites, respectively. Catalyzes the coordinated movement of the two tRNA molecules, the mRNA and conformational changes in the ribosome. This is Elongation factor G, chloroplastic (fusA) from Pisum sativum (Garden pea).